Here is an 86-residue protein sequence, read N- to C-terminus: MKTLLLTLVVVAIVCLDLGYTLTCLICPEKDCQKVHTCRNEEKICVKRSYDKNQLGWRAQRGCAVSCPKAKPNETVQCCSTDKCNK.

A signal peptide spans 1 to 23; that stretch reads MKTLLLTLVVVAIVCLDLGYTLT. Cystine bridges form between Cys24–Cys45, Cys27–Cys32, Cys38–Cys63, Cys67–Cys78, and Cys79–Cys84.

This sequence belongs to the three-finger toxin family. Ancestral subfamily. Orphan group II sub-subfamily. In terms of tissue distribution, expressed by the venom gland.

The protein resides in the secreted. Binds with low affinity to muscular (alpha-1-beta-1-delta-epsilon/CHRNA1-CHRNB1-CHRND-CHRNE) and very low affinity to neuronal (alpha-7/CHRNA7) nicotinic acetylcholine receptor (nAChR). In Bungarus candidus (Malayan krait), this protein is Weak toxin 2.